Reading from the N-terminus, the 132-residue chain is Protein NrdI (132 aa).

Belongs to the NrdI family.

Probably involved in ribonucleotide reductase function. The polypeptide is Protein NrdI (Staphylococcus epidermidis (strain ATCC 35984 / DSM 28319 / BCRC 17069 / CCUG 31568 / BM 3577 / RP62A)).